The sequence spans 595 residues: MAMAFPLSYTPTITVKPVTYSRRSNFVVFSSSSNGRDPLEENSVPNGVKSLEKLQEEKRRAELSARIASGAFTVRKSSFPSTVKNGLSKIGIPSNVLDFMFDWTGSDQDYPKVPEAKGSIQAVRNEAFFIPLYELFLTYGGIFRLTFGPKSFLIVSDPSIAKHILKDNAKAYSKGILAEILDFVMGKGLIPADGEIWRRRRRAIVPALHQKYVAAMISLFGEASDRLCQKLDAAALKGEEVEMESLFSRLTLDIIGKAVFNYDFDSLTNDTGVIEAVYTVLREAEDRSVSPIPVWDIPIWKDISPRQRKVATSLKLINDTLDDLIATCKRMVEEEELQFHEEYMNERDPSILHFLLASGDDVSSKQLRDDLMTMLIAGHETSAAVLTWTFYLLTTEPSVVAKLQEEVDSVIGDRFPTIQDMKKLKYTTRVMNESLRLYPQPPVLIRRSIDNDILGEYPIKRGEDIFISVWNLHRSPLHWDDAEKFNPERWPLDGPNPNETNQNFSYLPFGGGPRKCIGDMFASFENVVAIAMLIRRFNFQIAPGAPPVKMTTGATIHTTEGLKLTVTKRTKPLDIPSVPILPMDTSRDEVSSALS.

The N-terminal 28 residues, 1 to 28, are a transit peptide targeting the chloroplast; sequence MAMAFPLSYTPTITVKPVTYSRRSNFVV. A heme-binding site is contributed by cysteine 516.

The protein belongs to the cytochrome P450 family. Heme is required as a cofactor.

The protein localises to the plastid. It is found in the chloroplast. Functionally, heme-containing cytochrome P450 involved in the biosynthesis of xanthophylls. Specific for beta-ring hydroxylation of alpha- and beta-carotene. Also has a low activity toward the epsilon-rings of alpha-carotene. The beta-ring of alpha-carotene is the preferred substrate in planta. The polypeptide is Protein LUTEIN DEFICIENT 5, chloroplastic (CYP97A3) (Arabidopsis thaliana (Mouse-ear cress)).